The sequence spans 155 residues: Small ribosomal subunit protein uS7 (155 aa).

This sequence belongs to the universal ribosomal protein uS7 family. In terms of assembly, part of the 30S ribosomal subunit. Contacts proteins S9 and S11.

Functionally, one of the primary rRNA binding proteins, it binds directly to 16S rRNA where it nucleates assembly of the head domain of the 30S subunit. Is located at the subunit interface close to the decoding center, probably blocks exit of the E-site tRNA. The protein is Small ribosomal subunit protein uS7 of Kosmotoga olearia (strain ATCC BAA-1733 / DSM 21960 / TBF 19.5.1).